A 373-amino-acid polypeptide reads, in one-letter code: Cobalt-precorrin-5B C(1)-methyltransferase (373 aa).

This sequence belongs to the CbiD family.

It carries out the reaction Co-precorrin-5B + S-adenosyl-L-methionine = Co-precorrin-6A + S-adenosyl-L-homocysteine. Its pathway is cofactor biosynthesis; adenosylcobalamin biosynthesis; cob(II)yrinate a,c-diamide from sirohydrochlorin (anaerobic route): step 6/10. In terms of biological role, catalyzes the methylation of C-1 in cobalt-precorrin-5B to form cobalt-precorrin-6A. This chain is Cobalt-precorrin-5B C(1)-methyltransferase, found in Halorhodospira halophila (strain DSM 244 / SL1) (Ectothiorhodospira halophila (strain DSM 244 / SL1)).